Here is a 262-residue protein sequence, read N- to C-terminus: MALFSPPISSSSLQNPNFIPKFSFSLLSSNRFSLLSVTRASSDSGSTSPTAAVSVEAPEPVEVIVKEPPQSTPAVKKEETATAKNVAVEGEEMKTTESVVKFQDARWINGTWDLKQFEKDGKTDWDSVIVAEAKRRKWLEENPETTSNDEPVLFDTSIIPWWAWIKRYHLPEAELLNGRAAMIGFFMAYFVDSLTGVGLVDQMGNFFCKTLLFVAVAGVLFIRKNEDVDKLKNLFDETTLYDKQWQAAWKNDDDESLGSKKK.

A chloroplast-targeting transit peptide spans 1–39 (MALFSPPISSSSLQNPNFIPKFSFSLLSSNRFSLLSVTR). 2 helical membrane-spanning segments follow: residues 180–200 (AAMI…VGLV) and 202–222 (QMGN…VLFI).

In terms of assembly, interacts with GGR. Forms homodimer, and heterodimer with LIL3.2. In terms of tissue distribution, expressed in photosynthetically active tissues (at protein level).

Its subcellular location is the plastid. It is found in the chloroplast thylakoid membrane. Functionally, light-harvesting-like protein required for biosynthesis of phytylated chlorophylls and alpha-tocopherol in green seedlings. Functions by anchoring geranylgeranyl reductase (GGR) in the thylakoid membrane, leading to the stabilization of GGR activity. Binds chlorophyll a in the thylakoid membrane. Plays a role in the regulation of chlorophyll biosynthesis under light stress and under standard growth conditions. This Arabidopsis thaliana (Mouse-ear cress) protein is Light-harvesting complex-like protein 3 isotype 1, chloroplastic (LIL3.1).